An 888-amino-acid polypeptide reads, in one-letter code: Autophagy-related protein 9 (888 aa).

A disordered region spans residues 1-170; that stretch reads MASNIFSRIK…PYTTPMGPQP (170 aa). The Cytoplasmic segment spans residues 1–255; sequence MASNIFSRIK…CTRKMSGLWN (255 aa). Polar residues predominate over residues 13-24; the sequence is SGGSQSFYQQLR. The span at 28 to 38 shows a compositional bias: acidic residues; it reads DPEYDPGLDEE. Over residues 123-143 the composition is skewed to polar residues; that stretch reads RATNPGSSRTPASVGPSSART. The helical transmembrane segment at 256–276 threads the bilayer; the sequence is FAIWLYTFFFIWKCVQYFVEI. Residues 277–422 lie on the Lumenal side of the membrane; that stretch reads RRLTYIRDFY…RLLSQKLRQR (146 aa). Residues 423–443 traverse the membrane as a helical segment; that stretch reads FLFAGFLNLLFAPVVLAYVVI. The Cytoplasmic portion of the chain corresponds to 444–511; that stretch reads VYFFTYYYEY…PKRITEAVAR (68 aa). The stretch at 512–532 is an intramembrane region; the sequence is TIAFMSGAITAILAIGSVLDS. Topologically, residues 533–544 are cytoplasmic; sequence ELFLNFEITKDR. Residues 545-565 form a helical membrane-spanning segment; it reads PVIFYLGVFAAIWATTRGMVS. Residues 566-611 lie on the Lumenal side of the membrane; sequence EETLVFNPEYALRNVIEYTRYVPDHWKNKLHSSEVKQEFSELYKMK. Residues 612–632 form a helical membrane-spanning segment; that stretch reads VVIFLEEMMGIVTTPMLLLFS. Residues 633–642 lie on the Cytoplasmic side of the membrane; it reads LPRCSDQIVD. The stretch at 643-663 is an intramembrane region; sequence FFREFTIHVDGLGYVCSFAVF. Topologically, residues 664–888 are cytoplasmic; that stretch reads DFQKGPGNTG…QRPRRGGGMV (225 aa). Disordered stretches follow at residues 748 to 770 and 834 to 866; these read GRTG…PRIG and EPGG…DPEA.

Belongs to the ATG9 family. In terms of assembly, homotrimer; forms a homotrimer with a central pore that forms a path between the two membrane leaflets. Post-translationally, phosphorylated by ATG1. ATG1 phosphorylation is required for ATG18 interaction and preautophagosome elongation.

The protein resides in the preautophagosomal structure membrane. It localises to the cytoplasmic vesicle membrane. It is found in the golgi apparatus membrane. The protein localises to the endoplasmic reticulum membrane. The enzyme catalyses a 1,2-diacyl-sn-glycero-3-phosphocholine(in) = a 1,2-diacyl-sn-glycero-3-phosphocholine(out). It carries out the reaction a 1,2-diacyl-sn-glycero-3-phospho-L-serine(in) = a 1,2-diacyl-sn-glycero-3-phospho-L-serine(out). It catalyses the reaction a 1,2-diacyl-sn-glycero-3-phosphoethanolamine(in) = a 1,2-diacyl-sn-glycero-3-phosphoethanolamine(out). The catalysed reaction is a 1,2-diacyl-sn-glycero-3-phospho-(1D-myo-inositol-3-phosphate)(in) = a 1,2-diacyl-sn-glycero-3-phospho-(1D-myo-inositol-3-phosphate)(out). Its function is as follows. Phospholipid scramblase involved in autophagy and cytoplasm to vacuole transport (Cvt) vesicle formation. Cycles between the preautophagosomal structure/phagophore assembly site (PAS) and the cytoplasmic vesicle pool and supplies membrane for the growing autophagosome. Lipid scramblase activity plays a key role in preautophagosomal structure/phagophore assembly by distributing the phospholipids that arrive through ATG2 from the cytoplasmic to the luminal leaflet of the bilayer, thereby driving autophagosomal membrane expansion. Required for mitophagy. Also involved in endoplasmic reticulum-specific autophagic process and is essential for the survival of cells subjected to severe ER stress. Different machineries are required for anterograde trafficking to the PAS during either the Cvt pathway or bulk autophagy and for retrograde trafficking. Autophagy is required for proper vegetative growth, asexual/sexual reproduction, and full virulence. Autophagy is particularly involved in the biosynthesis of deoxynivalenol (DON), an important virulence determinant. Required for aerial hyphae development and lipid droplet degradation in response to starvation. This chain is Autophagy-related protein 9, found in Gibberella zeae (strain ATCC MYA-4620 / CBS 123657 / FGSC 9075 / NRRL 31084 / PH-1) (Wheat head blight fungus).